A 125-amino-acid chain; its full sequence is TSSK6-activating co-chaperone protein (125 aa).

2 disordered regions span residues 1–21 (MEQH…ANAV) and 97–125 (LAPG…QFSK). Residues 103–125 (SNNSSLPALSPNPLLNHLPQFSK) show a composition bias toward low complexity.

The protein belongs to the TSACC family. Interacts with HSP70. Associates with HSP90. Interacts with TSSK6; this interaction is direct and recruits TSACC to HSP90.

Co-chaperone that facilitates HSP-mediated activation of TSSK6. This chain is TSSK6-activating co-chaperone protein (TSACC), found in Macaca fascicularis (Crab-eating macaque).